The chain runs to 111 residues: Colipase (111 aa).

A signal peptide spans 1–16; sequence MKVLVLLLVTLAVVYA. A propeptide spans 17-21 (enterostatin, activation peptide); the sequence is APDPR. Intrachain disulfides connect C33–C44, C39–C55, C43–C77, C65–C85, and C79–C103.

This sequence belongs to the colipase family. In terms of assembly, forms a 1:1 stoichiometric complex with pancreatic lipase. In terms of tissue distribution, expressed by the pancreas.

Its subcellular location is the secreted. Colipase is a cofactor of pancreatic lipase. It allows the lipase to anchor itself to the lipid-water interface. Without colipase the enzyme is washed off by bile salts, which have an inhibitory effect on the lipase. Its function is as follows. Enterostatin has a biological activity as a satiety signal. This is Colipase (CLPS) from Ictidomys tridecemlineatus (Thirteen-lined ground squirrel).